Here is a 359-residue protein sequence, read N- to C-terminus: Chondroadherin (359 aa).

The signal sequence occupies residues Met1–Ala22. Cys23 and Cys38 are disulfide-bonded. The region spanning Cys23–Lys52 is the LRRNT domain. LRR repeat units lie at residues Asn76 to Gly97, Gln100 to Asp121, Glu124 to Pro145, Asn148 to Gly169, Asp172 to Asp193, Asn196 to Lys217, Val220 to Ser241, Tyr245 to Gly266, and Thr269 to Asp290. O-linked (GalNAc...) serine glycosylation is present at Ser144. Positions Asn300–Phe348 constitute an LRRCT domain. 2 cysteine pairs are disulfide-bonded: Cys304–Cys346 and Cys306–Cys326.

It belongs to the small leucine-rich proteoglycan (SLRP) family. SLRP class IV subfamily. In terms of assembly, mostly monomeric. Interacts with collagen type II. In terms of tissue distribution, present in chondrocytes at all ages.

The protein localises to the secreted. The protein resides in the extracellular space. Its subcellular location is the extracellular matrix. Its function is as follows. Promotes attachment of chondrocytes, fibroblasts, and osteoblasts. This binding is mediated (at least for chondrocytes and fibroblasts) by the integrin alpha(2)beta(1). May play an important role in the regulation of chondrocyte growth and proliferation. The protein is Chondroadherin (CHAD) of Homo sapiens (Human).